The sequence spans 207 residues: Uracil phosphoribosyltransferase (207 aa).

Residues Arg77, Arg102, and Asp129–Ser137 contribute to the 5-phospho-alpha-D-ribose 1-diphosphate site. Residues Ile192 and Gly197–Ala199 contribute to the uracil site. Asp198 contributes to the 5-phospho-alpha-D-ribose 1-diphosphate binding site.

It belongs to the UPRTase family. Mg(2+) is required as a cofactor.

The catalysed reaction is UMP + diphosphate = 5-phospho-alpha-D-ribose 1-diphosphate + uracil. It functions in the pathway pyrimidine metabolism; UMP biosynthesis via salvage pathway; UMP from uracil: step 1/1. With respect to regulation, allosterically activated by GTP. In terms of biological role, catalyzes the conversion of uracil and 5-phospho-alpha-D-ribose 1-diphosphate (PRPP) to UMP and diphosphate. The chain is Uracil phosphoribosyltransferase from Mycobacterium bovis (strain ATCC BAA-935 / AF2122/97).